A 357-amino-acid chain; its full sequence is MPFLGQDWRSPGWSWMKTEDGWKRCDAWSQELEGENSQCDIGHGIILNSEDEEIFSNEEHEFASKKRKKDHFRNDTNTQCFYRENWIYVHKESTRERHGYCTLGEAFNRLDFSSAIQDIRRFNYVVRLLQLIAKSQLTSLSGVAQKNYFNILDKIVQKVLGDHQNPRLIKDLLQDLSSTLCILIRGVGKSVLVGNINIWICRLETVLRWQQQLQNLQMTEVDSGLTLSDLPVHMLSNILYRFSDGWDIVTLGQVTPTLSALSEDRQLWKKLCQYHFGEKQFCRHLILSEKGHVEWKLMYFALQKHYPTKEQYGDTLHFCRHCSILFWKDSGHPCTAADPDSCFTPVSPQHFIDLFKY.

Residues 1 to 83 (MPFLGQDWRS…NDTNTQCFYR (83 aa)) are interaction with beta-actin. An F-box domain is found at 225–273 (LTLSDLPVHMLSNILYRFSDGWDIVTLGQVTPTLSALSEDRQLWKKLCQ).

As to quaternary structure, part of a SCF (SKP1-cullin-F-box) protein ligase complex consisting of FBXO25, SKP1, CUL1 and RBX1. Interacts directly with SKP1 and CUL1. Interacts (via C-terminus) with beta-actin (via N-terminus).

Its subcellular location is the nucleus. Its pathway is protein modification; protein ubiquitination. In terms of biological role, substrate-recognition component of the SCF (SKP1-CUL1-F-box protein)-type E3 ubiquitin ligase complex. May play a role in accumulation of expanded polyglutamine (polyQ) protein huntingtin (HTT). The polypeptide is F-box only protein 25 (FBXO25) (Bos taurus (Bovine)).